Here is a 249-residue protein sequence, read N- to C-terminus: Undecaprenyl-diphosphatase (249 aa).

A run of 8 helical transmembrane segments spans residues 11-31 (GLTE…TAIF), 35-55 (PDVG…VIFV), 74-94 (ITLS…GIFF), 101-121 (IFSE…FMLL), 135-155 (IPYL…LPGI), 175-195 (AVKY…VLEM), 208-228 (FIVA…MVIA), and 229-249 (GKLK…IFYI).

Belongs to the UppP family.

The protein resides in the cell membrane. The enzyme catalyses di-trans,octa-cis-undecaprenyl diphosphate + H2O = di-trans,octa-cis-undecaprenyl phosphate + phosphate + H(+). Catalyzes the dephosphorylation of undecaprenyl diphosphate (UPP). This is Undecaprenyl-diphosphatase from Methanococcus vannielii (strain ATCC 35089 / DSM 1224 / JCM 13029 / OCM 148 / SB).